The primary structure comprises 472 residues: WD repeat-containing protein 88 (472 aa).

The segment at 1 to 22 (MASPPRCSPTAHDRECKLPPPS) is disordered. WD repeat units lie at residues 100–139 (GHEHAVSTCHFCVDDTKLLSGSYDCTVKLWDPVDGSVVRD), 143–182 (RPKAPVVECSITGDSSRVIAASYDKTVRAWDLETGKLLWK), 184–224 (RYDT…TVSV), 228–267 (HHTRSITSCCFDPDSQRVASVSLDRCIKIWDVTSQATLLT), 271–310 (AHSNAISNCCFTFSGHFLCTSSWDKNLKIWNVHTGEFRNC), 319–358 (GHEGSVSSCHFARDSSFLISGGFDRTVAIWDVAEGYRKLS), and 361–400 (GHNDWVMDVAISNNKKWILSASKDRTMRLWNIEEIDEIPL). The disordered stretch occupies residues 447 to 472 (LPADTSSSSSSSERENSPPPRGSKDD). Residues 458-472 (SERENSPPPRGSKDD) show a composition bias toward basic and acidic residues.

The polypeptide is WD repeat-containing protein 88 (WDR88) (Homo sapiens (Human)).